The following is a 329-amino-acid chain: MSSAQRVVITPGEPAGIGPDLVVQLAQRAWPIELVVCADGALLTERAAMLGLPLSLLPYSPDVPAAPQPAGTLTLLPVSLRAPAIPGQLTVENGPYVVETLARACDGCLNGEFAALITGPVHKGVINDAGIPFTGHTEFFEERSQAKKVVMMLATEELRVALATTHLPLRAIADAITPALLHEVIAILHHDLRTKFGIAEPRILVCGLNPHAGEGGHMGTEEIDTIIPVLDELRAQGMKLNGPLPADTLFQPKYLDNADAVLAMYHDQGLPVLKYQGFGRGVNITLGLPFIRTSVDHGTALELAGRGKADVGSFITALNLAIKMIVNTQ.

Residues histidine 136 and threonine 137 each contribute to the substrate site. A divalent metal cation is bound by residues histidine 166, histidine 211, and histidine 266. Substrate is bound by residues lysine 274, asparagine 283, and arginine 292.

The protein belongs to the PdxA family. Homodimer. Requires Zn(2+) as cofactor. Mg(2+) is required as a cofactor. It depends on Co(2+) as a cofactor.

It localises to the cytoplasm. It catalyses the reaction 4-(phosphooxy)-L-threonine + NAD(+) = 3-amino-2-oxopropyl phosphate + CO2 + NADH. It participates in cofactor biosynthesis; pyridoxine 5'-phosphate biosynthesis; pyridoxine 5'-phosphate from D-erythrose 4-phosphate: step 4/5. Catalyzes the NAD(P)-dependent oxidation of 4-(phosphooxy)-L-threonine (HTP) into 2-amino-3-oxo-4-(phosphooxy)butyric acid which spontaneously decarboxylates to form 3-amino-2-oxopropyl phosphate (AHAP). The polypeptide is 4-hydroxythreonine-4-phosphate dehydrogenase (Salmonella typhi).